A 243-amino-acid chain; its full sequence is uncharacterized protein (243 aa).

Residues 55–75 (IILIILLTIFMVISTLVIAFV) form a helical membrane-spanning segment.

The protein localises to the membrane. This is an uncharacterized protein from Rickettsia prowazekii (strain Madrid E).